The sequence spans 365 residues: Chorismate synthase (365 aa).

Residues Arg48 and Arg54 each contribute to the NADP(+) site. FMN contacts are provided by residues 125–127 (RSS), 238–239 (NA), Gly278, 293–297 (KPTSS), and Arg319.

The protein belongs to the chorismate synthase family. In terms of assembly, homotetramer. FMNH2 is required as a cofactor.

It catalyses the reaction 5-O-(1-carboxyvinyl)-3-phosphoshikimate = chorismate + phosphate. Its pathway is metabolic intermediate biosynthesis; chorismate biosynthesis; chorismate from D-erythrose 4-phosphate and phosphoenolpyruvate: step 7/7. Functionally, catalyzes the anti-1,4-elimination of the C-3 phosphate and the C-6 proR hydrogen from 5-enolpyruvylshikimate-3-phosphate (EPSP) to yield chorismate, which is the branch point compound that serves as the starting substrate for the three terminal pathways of aromatic amino acid biosynthesis. This reaction introduces a second double bond into the aromatic ring system. The polypeptide is Chorismate synthase (Vesicomyosocius okutanii subsp. Calyptogena okutanii (strain HA)).